Reading from the N-terminus, the 522-residue chain is Glutamyl-tRNA(Gln) amidotransferase subunit A (522 aa).

Active-site charge relay system residues include K88 and S163. Catalysis depends on S187, which acts as the Acyl-ester intermediate.

The protein belongs to the amidase family. GatA subfamily. In terms of assembly, heterotrimer of A, B and C subunits.

The enzyme catalyses L-glutamyl-tRNA(Gln) + L-glutamine + ATP + H2O = L-glutaminyl-tRNA(Gln) + L-glutamate + ADP + phosphate + H(+). Functionally, allows the formation of correctly charged Gln-tRNA(Gln) through the transamidation of misacylated Glu-tRNA(Gln) in organisms which lack glutaminyl-tRNA synthetase. The reaction takes place in the presence of glutamine and ATP through an activated gamma-phospho-Glu-tRNA(Gln). This is Glutamyl-tRNA(Gln) amidotransferase subunit A from Paenarthrobacter aurescens (strain TC1).